We begin with the raw amino-acid sequence, 185 residues long: Isopentenyl-diphosphate Delta-isomerase (185 aa).

Residues histidine 27 and histidine 34 each coordinate Mn(2+). The region spanning 32–168 (PLHLAFSCHL…PWAFSPWLTL (137 aa)) is the Nudix hydrolase domain. Cysteine 69 is an active-site residue. Cysteine 69 contacts Mg(2+). Histidine 71 is a binding site for Mn(2+). Glutamate 89 provides a ligand contact to Mg(2+). Mn(2+) is bound by residues glutamate 118 and glutamate 120. Glutamate 120 is a catalytic residue.

Belongs to the IPP isomerase type 1 family. Mg(2+) is required as a cofactor. The cofactor is Mn(2+).

It localises to the cytoplasm. The catalysed reaction is isopentenyl diphosphate = dimethylallyl diphosphate. Its pathway is isoprenoid biosynthesis; dimethylallyl diphosphate biosynthesis; dimethylallyl diphosphate from isopentenyl diphosphate: step 1/1. Catalyzes the 1,3-allylic rearrangement of the homoallylic substrate isopentenyl (IPP) to its highly electrophilic allylic isomer, dimethylallyl diphosphate (DMAPP). This is Isopentenyl-diphosphate Delta-isomerase from Leifsonia xyli subsp. xyli (strain CTCB07).